Reading from the N-terminus, the 1907-residue chain is Receptor-type tyrosine-protein phosphatase S (1907 aa).

Residues 1–29 (MAPTWSPSVVSVVGPVGLFLVLLARGCLA) form the signal peptide. Topologically, residues 30–1257 (EEPPRFIREP…PQPIVDGEEG (1228 aa)) are extracellular. 3 Ig-like C2-type domains span residues 33–123 (PRFI…AKLT), 135–224 (PNID…ANLY), and 232–314 (PRFS…AQIT). Cystine bridges form between C54–C107 and C156–C207. The important for binding to glycosaminoglycan chains stretch occupies residues 68–72 (KKGKK). 2 N-linked (GlcNAc...) asparagine glycosylation sites follow: N250 and N295. Residues C253 and C298 are joined by a disulfide bond. Fibronectin type-III domains lie at 321–411 (APGT…TGEQ), 416–510 (APRN…TQQG), 514–603 (QPMN…TLQA), 608–705 (PPQD…TDED), 710–809 (PPRK…TKGA), 810–906 (VLGR…APRG), 907–1008 (FPQI…LARD), and 1011–1095 (SPKN…TAFN). Positions 691-700 (PGPESSPVVV) are enriched in low complexity. Residues 691–711 (PGPESSPVVVRTDEDVPSAPP) form a disordered region. N720 carries N-linked (GlcNAc...) asparagine glycosylation. Residue N916 is glycosylated (N-linked (GlcNAc...) asparagine). Residues 1258-1278 (LIWVIGPVLAVVFIICIVIAI) traverse the membrane as a helical segment. The Cytoplasmic portion of the chain corresponds to 1279 to 1907 (LLYKNKPDSK…YLGSFDHYAT (629 aa)). Positions 1286 to 1296 (DSKRKDSEPRT) are enriched in basic and acidic residues. Residues 1286-1313 (DSKRKDSEPRTKCLLNNADLAPHHPKDP) are disordered. 2 Tyrosine-protein phosphatase domains span residues 1352 to 1607 (LSQE…LLEA) and 1639 to 1898 (MELE…ALEY). Residues D1516, 1548–1554 (CSAGVGR), and Q1592 each bind substrate. C1548 serves as the catalytic Phosphocysteine intermediate. C1839 (phosphocysteine intermediate) is an active-site residue.

Belongs to the protein-tyrosine phosphatase family. Receptor class 2A subfamily. Binding to large heparan sulfate proteoglycan structures promotes oligomerization. Binding to chondroitin sulfate proteoglycan does not lead to oligomerization. Interacts (via Ig-like domains) with NTRK3. Interacts (via Ig-like domains) with NTRK1, but does not form detectable complexes with NTRK2. Interacts with PPFIA1, PPFIA2 and PPFIA3. In terms of processing, a cleavage occurs, separating the extracellular domain from the transmembrane segment. This process called 'ectodomain shedding' is thought to be involved in receptor desensitization, signal transduction and/or membrane localization. As to expression, detected in brain cortex, cerebellum and thoracic spinal cord (at protein level). Detected in motor cortex and white matter of the spinal cord, but not in spinal cord gray matter. Isoform 1 and isoform 6 are predominantly expressed in the brain (cerebrum and cerebellum) and to a lesser extent in the heart and skeletal muscle. Also found in neuronal-derived cell lines. Detected in the ganglion cell layer of the retina and in glial cells along the optic nerve. Detected in bone marrow and spleen plasmacytoid dendritic cells.

The protein localises to the cell membrane. The protein resides in the cell projection. It localises to the axon. Its subcellular location is the perikaryon. It is found in the cytoplasmic vesicle. The protein localises to the secretory vesicle. The protein resides in the synaptic vesicle membrane. It localises to the synapse. Its subcellular location is the synaptosome. It is found in the postsynaptic density. The protein localises to the neuron projection. The protein resides in the growth cone. The enzyme catalyses O-phospho-L-tyrosyl-[protein] + H2O = L-tyrosyl-[protein] + phosphate. Functionally, cell surface receptor that binds to glycosaminoglycans, including chondroitin sulfate proteoglycans and heparan sulfate proteoglycans. Binding to chondroitin sulfate and heparan sulfate proteoglycans has opposite effects on PTPRS oligomerization and regulation of neurite outgrowth. Contributes to the inhibition of neurite and axonal outgrowth by chondroitin sulfate proteoglycans, also after nerve transection. Plays a role in stimulating neurite outgrowth in response to the heparan sulfate proteoglycan GPC2. Required for normal brain development, especially for normal development of the pituitary gland and the olfactory bulb. Functions as a tyrosine phosphatase. Mediates dephosphorylation of NTRK1, NTRK2 and NTRK3. Plays a role in down-regulation of signaling cascades that lead to the activation of Akt and MAP kinases. Down-regulates TLR9-mediated activation of NF-kappa-B, as well as production of TNF, interferon alpha and interferon beta. The chain is Receptor-type tyrosine-protein phosphatase S (Ptprs) from Mus musculus (Mouse).